Here is a 385-residue protein sequence, read N- to C-terminus: Lipid-A-disaccharide synthase (385 aa).

This sequence belongs to the LpxB family.

It carries out the reaction a lipid X + a UDP-2-N,3-O-bis[(3R)-3-hydroxyacyl]-alpha-D-glucosamine = a lipid A disaccharide + UDP + H(+). It participates in bacterial outer membrane biogenesis; LPS lipid A biosynthesis. In terms of biological role, condensation of UDP-2,3-diacylglucosamine and 2,3-diacylglucosamine-1-phosphate to form lipid A disaccharide, a precursor of lipid A, a phosphorylated glycolipid that anchors the lipopolysaccharide to the outer membrane of the cell. This is Lipid-A-disaccharide synthase from Pseudoalteromonas translucida (strain TAC 125).